The chain runs to 420 residues: LFFQKKYFLDKQLNQNAIQIYQDNLTNQNNNIGKKAKLEDEKHAHNKSITSKYKRVPLASISNVQGSRIQPTRAAKEKLKPPQNISDSQLVNDSLKSSNSIQAHNTKNDLHKENLYNESALDTFKESPMVFSPFLSDSSCKKYSSLNGIQDIDSKLHEVFELPEYAQDIHNYLKKSEAKYRPKSNYMRKQTDINSSMRAILIDWLVEVSEEYKLIPQTLYLSVSYIDRFLSHMSVLRGKLQLVGAACMLVAAKFEEIYPPEVAEFVYITDDTYTAKQVLRMEHLILKTLAFDLSVPTCRDFLSRYLFAANAKPESQLKYLAEYLSELTLINCDISVKYAPSMIAASSICVANHMLNSIPWTPTLEFYSGYNIQDLRSCLNEIHLLHLAASTNPQQAIQQKYKSPKFGCVSSLVPLEMPCF.

A disordered region spans residues 64 to 93 (VQGSRIQPTRAAKEKLKPPQNISDSQLVND). The span at 83–93 (QNISDSQLVND) shows a compositional bias: polar residues.

Belongs to the cyclin family. Cyclin AB subfamily.

In terms of biological role, essential for the control of the cell cycle at the G2/M (mitosis) transition. Interacts with the CDC2 and CDK2 protein kinases to form MPF. G2/M cyclins accumulate steadily during G2 and are abruptly destroyed at mitosis. This Hydra viridissima (Green hydra) protein is G2/mitotic-specific cyclin-A.